A 234-amino-acid chain; its full sequence is Zein-alpha A30 (234 aa).

The signal sequence occupies residues 1-21; the sequence is MAAKIFCLLMLLGLSASAATA.

It belongs to the zein family.

Its function is as follows. Zeins are major seed storage proteins. This is Zein-alpha A30 from Zea mays (Maize).